The following is an 873-amino-acid chain: Zinc fingers and homeoboxes protein 1 (873 aa).

A disordered region spans residues Met-1–Asn-63. The segment covering Gln-18–Glu-30 has biased composition (acidic residues). Thr-36 bears the Phosphothreonine mark. Phosphoserine occurs at positions 45, 47, and 48. 2 consecutive C2H2-type zinc fingers follow at residues Tyr-70–His-93 and Tyr-102–His-125. A Glycyl lysine isopeptide (Lys-Gly) (interchain with G-Cter in SUMO2) cross-link involves residue Lys-159. Ser-202 is modified (phosphoserine). A disordered region spans residues Ser-202–Thr-236. A compositionally biased stretch (basic and acidic residues) spans Asn-212–Ile-221. Low complexity predominate over residues Glu-223–Thr-236. The tract at residues Asn-272–Pro-432 is required for dimerization. The segment at Asn-272 to Phe-564 is required for interaction with NFYA. Positions Asn-284–Glu-346 form a DNA-binding region, homeobox 1. Residues Lys-441, Lys-454, Lys-485, and Lys-629 each participate in a glycyl lysine isopeptide (Lys-Gly) (interchain with G-Cter in SUMO2) cross-link. 2 consecutive DNA-binding regions (homeobox) follow at residues Ser-464–Gln-526 and Pro-569–Met-630. 2 disordered regions span residues Lys-626–Lys-667 and Ser-732–Trp-769. Ser-648 is modified (phosphoserine). Positions Ser-660–Trp-722 form a DNA-binding region, homeobox 4. Positions Met-734–Asn-768 are required for nuclear localization. Over residues Leu-740–Lys-764 the composition is skewed to basic residues. Ser-774 bears the Phosphoserine mark. Positions Lys-777–Phe-832 form a DNA-binding region, homeobox 5. The disordered stretch occupies residues Ile-829 to Asp-873. Over residues Leu-831–Thr-857 the composition is skewed to acidic residues. Residues Leu-831 to Asp-873 form a required for repressor activity region. Residues His-863 to Asp-873 show a composition bias toward basic residues.

This sequence belongs to the ZHX family. As to quaternary structure, forms homodimers. Also forms heterodimers with ZHX3 which is a prerequisite for repressor activity and with ZHX2. Interacts with NFYA. Interacts with ATF7IP.

Its subcellular location is the nucleus. Acts as a transcriptional repressor. This chain is Zinc fingers and homeoboxes protein 1 (ZHX1), found in Gorilla gorilla gorilla (Western lowland gorilla).